A 462-amino-acid polypeptide reads, in one-letter code: Jasmonoyl--L-amino acid synthetase GH3.3 (462 aa).

Residue Ser-103 coordinates ATP. Ser-106 provides a ligand contact to jasmonate. Residues Thr-126, Asn-172, and 337 to 342 (GASEGW) each bind ATP. 170 to 174 (TTNVY) is a binding site for an L-alpha-amino acid. Residues 334-337 (AEYG) and Ser-339 each bind jasmonate.

This sequence belongs to the IAA-amido conjugating enzyme family. Expressed in green shoots and flowers.

The catalysed reaction is a jasmonate + an L-alpha-amino acid + ATP = a jasmonyl-L-amino acid + AMP + diphosphate + H(+). Catalyzes the synthesis of jasmonate-amino acid conjugates by adenylation. Catalyzes the conjugation of jasmonate (JA) to Ile when expressed in a heterologous system (E.coli). Catalyzes in vitro the conjugation of jasmonate (JA) to Ile, Phe, Leu, Met, Val and Trp. May catalyze the synthesis of indole-3-acetic acid (IAA)-amino acid conjugates, providing a mechanism for the plant to cope with the presence of excess auxin. The polypeptide is Jasmonoyl--L-amino acid synthetase GH3.3 (Oryza sativa subsp. japonica (Rice)).